Reading from the N-terminus, the 341-residue chain is L-threonine 3-dehydrogenase (341 aa).

Residue C38 coordinates Zn(2+). Residues T40 and H43 each act as charge relay system in the active site. The Zn(2+) site is built by H63, E64, C93, C96, C99, and C107. NAD(+) contacts are provided by residues I175, D195, R200, 262 to 264 (LGI), and 286 to 287 (IY).

The protein belongs to the zinc-containing alcohol dehydrogenase family. Homotetramer. Zn(2+) serves as cofactor.

The protein localises to the cytoplasm. The catalysed reaction is L-threonine + NAD(+) = (2S)-2-amino-3-oxobutanoate + NADH + H(+). Its pathway is amino-acid degradation; L-threonine degradation via oxydo-reductase pathway; glycine from L-threonine: step 1/2. Its function is as follows. Catalyzes the NAD(+)-dependent oxidation of L-threonine to 2-amino-3-ketobutyrate. In Yersinia pestis bv. Antiqua (strain Antiqua), this protein is L-threonine 3-dehydrogenase.